Here is a 1025-residue protein sequence, read N- to C-terminus: Multidrug resistance protein MdtC (1025 aa).

Helical transmembrane passes span 3 to 23, 333 to 353, 360 to 380, 387 to 407, 431 to 451, 463 to 483, 528 to 548, 853 to 873, 875 to 895, 897 to 917, 953 to 973, and 984 to 1004; these read FFAL…AITL, EVEQ…FLFL, IIPA…MYLC, LSLM…IVVL, VGFT…PLLL, FAVT…TLTP, LVGV…ISIP, VILI…LYES, VHPL…LLAL, LFNA…IGIV, PIMM…LSGG, and ITIV…TPVV.

This sequence belongs to the resistance-nodulation-cell division (RND) (TC 2.A.6) family. MdtC subfamily. In terms of assembly, part of a tripartite efflux system composed of MdtA, MdtB and MdtC. MdtC forms a heteromultimer with MdtB.

The protein resides in the cell inner membrane. The MdtABC tripartite complex confers resistance against novobiocin and deoxycholate. The protein is Multidrug resistance protein MdtC of Escherichia coli (strain SMS-3-5 / SECEC).